A 299-amino-acid chain; its full sequence is Sugar transporter SWEET1 (299 aa).

In terms of domain architecture, MtN3/slv 1 spans 7–91 (QVLSISAITT…CVFFLIYSLP (85 aa)). 7 helical membrane passes run 8 to 28 (VLSISAITTTIALFFCGIPIC), 36 to 56 (AVGDISGVPFLMGVLGGSFWL), 67 to 87 (MIIVNVVGVACMAFYCVFFLI), 95 to 115 (FTCQLILVTSTIGGMVLWIAL), 124 to 144 (VICMTFNIMNFGAPLAGLGVV), 155 to 175 (LPMCVANFLVSSQWCLYGNLV), and 180 to 200 (IIIPNGIGMFLAIVQLALFVV). The MtN3/slv 2 domain maps to 121–205 (YLGVICMTFN…ALFVVLPIRE (85 aa)). A disordered region spans residues 230–299 (RGDCIVSSPP…DPDLSSIQSP (70 aa)). The span at 247 to 261 (NETRSDVEDKFDKLM) shows a compositional bias: basic and acidic residues. Low complexity predominate over residues 276–299 (SMGSPPSYKSRSSSDPDLSSIQSP).

The protein belongs to the SWEET sugar transporter family.

It is found in the golgi apparatus membrane. The protein resides in the cell membrane. Its function is as follows. Mediates both low-affinity uptake and efflux of sugar across the membrane. This chain is Sugar transporter SWEET1 (swt-1), found in Caenorhabditis elegans.